We begin with the raw amino-acid sequence, 62 residues long: Translational regulator CsrA (62 aa).

This sequence belongs to the CsrA/RsmA family. As to quaternary structure, homodimer; the beta-strands of each monomer intercalate to form a hydrophobic core, while the alpha-helices form wings that extend away from the core.

Its subcellular location is the cytoplasm. In terms of biological role, a key translational regulator that binds mRNA to regulate translation initiation and/or mRNA stability. Mediates global changes in gene expression, shifting from rapid growth to stress survival by linking envelope stress, the stringent response and the catabolite repression systems. Usually binds in the 5'-UTR; binding at or near the Shine-Dalgarno sequence prevents ribosome-binding, repressing translation, binding elsewhere in the 5'-UTR can activate translation and/or stabilize the mRNA. Its function is antagonized by small RNA(s). This Idiomarina loihiensis (strain ATCC BAA-735 / DSM 15497 / L2-TR) protein is Translational regulator CsrA.